Consider the following 199-residue polypeptide: Glycerol-3-phosphate acyltransferase (199 aa).

5 consecutive transmembrane segments (helical) span residues 3 to 23, 55 to 75, 79 to 99, 113 to 133, and 155 to 175; these read IKIL…AYIV, VITL…ATFI, FSYS…TIFL, VFFA…GLAF, and YFLG…LLII.

The protein belongs to the PlsY family. In terms of assembly, probably interacts with PlsX.

Its subcellular location is the cell inner membrane. It catalyses the reaction an acyl phosphate + sn-glycerol 3-phosphate = a 1-acyl-sn-glycero-3-phosphate + phosphate. Its pathway is lipid metabolism; phospholipid metabolism. Functionally, catalyzes the transfer of an acyl group from acyl-phosphate (acyl-PO(4)) to glycerol-3-phosphate (G3P) to form lysophosphatidic acid (LPA). This enzyme utilizes acyl-phosphate as fatty acyl donor, but not acyl-CoA or acyl-ACP. The protein is Glycerol-3-phosphate acyltransferase of Endomicrobium trichonymphae.